Here is a 283-residue protein sequence, read N- to C-terminus: Bifunctional protein FolD (283 aa).

Residues 164–166, S189, and I230 each bind NADP(+); that span reads GRS.

This sequence belongs to the tetrahydrofolate dehydrogenase/cyclohydrolase family. Homodimer.

It catalyses the reaction (6R)-5,10-methylene-5,6,7,8-tetrahydrofolate + NADP(+) = (6R)-5,10-methenyltetrahydrofolate + NADPH. The catalysed reaction is (6R)-5,10-methenyltetrahydrofolate + H2O = (6R)-10-formyltetrahydrofolate + H(+). It functions in the pathway one-carbon metabolism; tetrahydrofolate interconversion. Its function is as follows. Catalyzes the oxidation of 5,10-methylenetetrahydrofolate to 5,10-methenyltetrahydrofolate and then the hydrolysis of 5,10-methenyltetrahydrofolate to 10-formyltetrahydrofolate. This chain is Bifunctional protein FolD, found in Lactobacillus delbrueckii subsp. bulgaricus (strain ATCC BAA-365 / Lb-18).